The chain runs to 1218 residues: Structural maintenance of chromosomes protein 2 (1218 aa).

32-39 lines the ATP pocket; it reads GLNGSGKS. Residues 209–517 adopt a coiled-coil conformation; sequence VKLKKEKEEY…INSVKIDYKI (309 aa). In terms of domain architecture, SMC hinge spans 525–654; the sequence is DVLGQIYKLI…CSNVDLCKKI (130 aa). 2 coiled-coil regions span residues 693–949 and 978–1045; these read LNYE…DTVK and RHDV…KKSE.

This sequence belongs to the SMC family. SMC2 subfamily.

Its subcellular location is the nucleus. Functionally, may play a role in the conversion of interphase chromatin into condensed chromosomes. The protein is Structural maintenance of chromosomes protein 2 of Plasmodium falciparum (isolate 3D7).